The primary structure comprises 733 residues: DNA-binding protein SATB2 (733 aa).

Residues 1–47 (MERRSESPCLRDSPDRRSGSPDVKGPPPVKVARLEQNGSPMGARGRP) are disordered. Residue Ser-20 is modified to Phosphoserine. Residues Lys-24 and Lys-30 each participate in a glycyl lysine isopeptide (Lys-Gly) (interchain with G-Cter in SUMO2) cross-link. Residue Ser-39 is modified to Phosphoserine. The 102-residue stretch at 57–158 (GLMIPVFCVV…VVTLKIQLQS (102 aa)) folds into the CMP domain. Lys-161 participates in a covalent cross-link: Glycyl lysine isopeptide (Lys-Gly) (interchain with G-Cter in SUMO2). The region spanning 161–234 (KLEDLPAEQW…WYKKYKKIKV (74 aa)) is the CUTL domain. Lys-233 participates in a covalent cross-link: Glycyl lysine isopeptide (Lys-Gly) (interchain with G-Cter in SUMO). Lys-350 participates in a covalent cross-link: Glycyl lysine isopeptide (Lys-Gly) (interchain with G-Cter in SUMO); alternate. A Glycyl lysine isopeptide (Lys-Gly) (interchain with G-Cter in SUMO2); alternate cross-link involves residue Lys-350. Residues 350 to 437 (KPEPTNSSVE…ERDRIYQDER (88 aa)) constitute a DNA-binding region (CUT 1). Residues 435–473 (DERERSMNPNVSMVSSASSSPSSSRTPQAKTSTPTTDLP) form a disordered region. Low complexity predominate over residues 441–458 (MNPNVSMVSSASSSPSSS). Ser-454 is modified (phosphoserine). Polar residues predominate over residues 459–470 (RTPQAKTSTPTT). Position 467 is a phosphothreonine (Thr-467). Residues 473–560 (PIKVDGANVN…ERDVIYEEES (88 aa)) constitute a DNA-binding region (CUT 2). Lys-475 participates in a covalent cross-link: Glycyl lysine isopeptide (Lys-Gly) (interchain with G-Cter in SUMO2). 2 disordered regions span residues 580–617 (QVLH…KPRS) and 691–733 (DEEL…TDQR). A Phosphoserine modification is found at Ser-594. Positions 615 to 674 (PRSRTKISLEALGILQSFIHDVGLYPDQEAIHTLSAQLDLPKHTIIKFFQNQRYHVKHHG) form a DNA-binding region, homeobox. Residues 694–708 (LLTESEENDSEEGSE) show a composition bias toward acidic residues. Residues 709 to 733 (EMYKVEAEEENADKSKAAPAETDQR) are compositionally biased toward basic and acidic residues. Lys-724 participates in a covalent cross-link: Glycyl lysine isopeptide (Lys-Gly) (interchain with G-Cter in SUMO2).

It belongs to the CUT homeobox family. As to quaternary structure, interacts with PIAS1. Interacts with ATF4 and RUNX2; resulting in enhanced DNA binding and transactivation by these transcription factors. Post-translationally, sumoylated by PIAS1. Sumoylation promotes nuclear localization, but represses transcription factor activity. As to expression, expressed in cortical neurons that extend axons across the corpus callosum. Also expressed in branchial arches and in cells of the osteoblast lineage, but not in chondrocytes and osteoclasts.

It localises to the nucleus matrix. Functionally, binds to DNA, at nuclear matrix- or scaffold-associated regions. Thought to recognize the sugar-phosphate structure of double-stranded DNA. Transcription factor controlling nuclear gene expression, by binding to matrix attachment regions (MARs) of DNA and inducing a local chromatin-loop remodeling. Acts as a docking site for several chromatin remodeling enzymes and also by recruiting corepressors (HDACs) or coactivators (HATs) directly to promoters and enhancers. Required for the initiation of the upper-layer neurons (UL1) specific genetic program and for the inactivation of deep-layer neurons (DL) and UL2 specific genes, probably by modulating Bcl11b expression. Repressor of Ctip2 and regulatory determinant of corticocortical connections in the developing cerebral cortex. May play an important role in palate formation. Acts as a molecular node in a transcriptional network regulating skeletal development and osteoblast differentiation. The protein is DNA-binding protein SATB2 (Satb2) of Mus musculus (Mouse).